Reading from the N-terminus, the 657-residue chain is Glycogen debranching enzyme (657 aa).

Asp336 acts as the Nucleophile in catalysis. The Proton donor role is filled by Glu371. The segment at 460–479 (ANGEENRDGTNNNYSNNHGK) is disordered.

Belongs to the glycosyl hydrolase 13 family.

It catalyses the reaction Hydrolysis of (1-&gt;6)-alpha-D-glucosidic linkages to branches with degrees of polymerization of three or four glucose residues in limit dextrin.. It participates in glycan degradation; glycogen degradation. In terms of biological role, removes maltotriose and maltotetraose chains that are attached by 1,6-alpha-linkage to the limit dextrin main chain, generating a debranched limit dextrin. The polypeptide is Glycogen debranching enzyme (Escherichia coli O127:H6 (strain E2348/69 / EPEC)).